The primary structure comprises 86 residues: Large ribosomal subunit protein bL31B (86 aa).

This sequence belongs to the bacterial ribosomal protein bL31 family. Type B subfamily. In terms of assembly, part of the 50S ribosomal subunit.

In Cupriavidus pinatubonensis (strain JMP 134 / LMG 1197) (Cupriavidus necator (strain JMP 134)), this protein is Large ribosomal subunit protein bL31B.